A 180-amino-acid chain; its full sequence is GTP cyclohydrolase 1 (180 aa).

Residues Cys-71, His-74, and Cys-142 each contribute to the Zn(2+) site.

The protein belongs to the GTP cyclohydrolase I family. As to quaternary structure, homomer.

It carries out the reaction GTP + H2O = 7,8-dihydroneopterin 3'-triphosphate + formate + H(+). Its pathway is cofactor biosynthesis; 7,8-dihydroneopterin triphosphate biosynthesis; 7,8-dihydroneopterin triphosphate from GTP: step 1/1. This is GTP cyclohydrolase 1 from Helicobacter pylori (strain P12).